The chain runs to 754 residues: DNA topoisomerase 4 subunit A (754 aa).

A Topo IIA-type catalytic domain is found at 38–501 (LPHIGDGLKP…EARALSETEL (464 aa)). The active-site O-(5'-phospho-DNA)-tyrosine intermediate is Y127.

The protein belongs to the type II topoisomerase GyrA/ParC subunit family. ParC type 1 subfamily. As to quaternary structure, heterotetramer composed of ParC and ParE.

It localises to the cell membrane. It catalyses the reaction ATP-dependent breakage, passage and rejoining of double-stranded DNA.. Its function is as follows. Topoisomerase IV is essential for chromosome segregation. It relaxes supercoiled DNA. Performs the decatenation events required during the replication of a circular DNA molecule. In Pseudomonas aeruginosa (strain ATCC 15692 / DSM 22644 / CIP 104116 / JCM 14847 / LMG 12228 / 1C / PRS 101 / PAO1), this protein is DNA topoisomerase 4 subunit A.